The primary structure comprises 252 residues: Small ribosomal subunit protein uS3 (252 aa).

In terms of domain architecture, KH type-2 spans 39-109; it reads IRNYVNTRLK…EVKIDVVEVV (71 aa). The segment covering 222–240 has biased composition (basic and acidic residues); the sequence is MKKIRDRRNDQRSRGGRDS. The segment at 222–252 is disordered; the sequence is MKKIRDRRNDQRSRGGRDSRNKRRRRPKNTA. Residues 241–252 are compositionally biased toward basic residues; it reads RNKRRRRPKNTA.

The protein belongs to the universal ribosomal protein uS3 family. As to quaternary structure, part of the 30S ribosomal subunit. Forms a tight complex with proteins S10 and S14.

In terms of biological role, binds the lower part of the 30S subunit head. Binds mRNA in the 70S ribosome, positioning it for translation. The polypeptide is Small ribosomal subunit protein uS3 (Chlorobium phaeobacteroides (strain BS1)).